Consider the following 319-residue polypeptide: Lipoyl synthase (319 aa).

The interval 1 to 32 (MVVLVDTVSSTPVRPRHPEKAARPDSLSPKKP) is disordered. Over residues 16-32 (RHPEKAARPDSLSPKKP) the composition is skewed to basic and acidic residues. Residues C61, C66, C72, C87, C91, C94, and S300 each contribute to the [4Fe-4S] cluster site. Residues 73-289 (WDKKHATFMI…GKTAYAKGFL (217 aa)) form the Radical SAM core domain.

The protein belongs to the radical SAM superfamily. Lipoyl synthase family. The cofactor is [4Fe-4S] cluster.

The protein localises to the cytoplasm. It carries out the reaction [[Fe-S] cluster scaffold protein carrying a second [4Fe-4S](2+) cluster] + N(6)-octanoyl-L-lysyl-[protein] + 2 oxidized [2Fe-2S]-[ferredoxin] + 2 S-adenosyl-L-methionine + 4 H(+) = [[Fe-S] cluster scaffold protein] + N(6)-[(R)-dihydrolipoyl]-L-lysyl-[protein] + 4 Fe(3+) + 2 hydrogen sulfide + 2 5'-deoxyadenosine + 2 L-methionine + 2 reduced [2Fe-2S]-[ferredoxin]. The protein operates within protein modification; protein lipoylation via endogenous pathway; protein N(6)-(lipoyl)lysine from octanoyl-[acyl-carrier-protein]: step 2/2. In terms of biological role, catalyzes the radical-mediated insertion of two sulfur atoms into the C-6 and C-8 positions of the octanoyl moiety bound to the lipoyl domains of lipoate-dependent enzymes, thereby converting the octanoylated domains into lipoylated derivatives. This chain is Lipoyl synthase, found in Rhodopseudomonas palustris (strain BisB5).